The primary structure comprises 687 residues: Chloride channel protein ClC-Ka (687 aa).

4 helical membrane passes run 52–72 (FLMT…FALG), 161–181 (LFLG…AYLG), 202–222 (VAGA…GVLF), and 236–256 (YWRG…LAVF). Ca(2+) is bound by residues Glu-259, Glu-261, Asp-278, and Glu-281. The next 6 membrane-spanning stretches (helical) occupy residues 282 to 302 (IFFF…YLYC), 325 to 345 (PLYA…PGVG), 396 to 416 (FTIF…LILA), 417 to 437 (TTIP…AAIG), 452 to 472 (IVAG…AGAA), and 486 to 506 (LLAF…MAVL). Over 507–687 (AANAIAQSCQ…SALTNPPPAK (181 aa)) the chain is Cytoplasmic. 2 consecutive CBS domains span residues 551 to 612 (MRRA…ARAS) and 628 to 686 (TEPV…PPPA).

This sequence belongs to the chloride channel (TC 2.A.49) family. CLCNKA subfamily. Homodimer. Interacts with BSND. As to expression, expressed predominantly in the kidney.

It is found in the basolateral cell membrane. The catalysed reaction is chloride(in) = chloride(out). It carries out the reaction bromide(in) = bromide(out). The enzyme catalyses nitrate(in) = nitrate(out). It catalyses the reaction iodide(out) = iodide(in). Its function is as follows. Anion-selective channel permeable to small monovalent anions with ion selectivity for chloride &gt; bromide &gt; nitrate &gt; iodide. Forms a homodimeric channel where each subunit has its own ion conduction pathway. May conduct double-barreled currents controlled by two types of gates, two fast gates that control each subunit independently and a slow common gate that opens and shuts off both subunits simultaneously. Assembles with the regulatory subunit BSND/Barttin for sorting at the basolateral plasma membrane domain and functional switch to the ion conducting state. CLCNKA:BSND channels display mostly a linear current-voltage relationship with fast gating at negative potentials. Mediates transepithelial chloride transport from the lumen to interstitial compartment along the thin ascending limb of Henle's loop, contributing to generation of hypertonic medullary interstitium as a countercurrent system to achieve urine concentration. Conducts chloride currents in the stria vascularis of the inner ear to establish the endocochlear potential necessary for normal hearing. The sequence is that of Chloride channel protein ClC-Ka (CLCNKA) from Oryctolagus cuniculus (Rabbit).